Reading from the N-terminus, the 118-residue chain is MTSYTFTRELRLLTPAQFKSVFSNPIKASSAEITLLAIPNSEQHPRLGLTVAKRYVKRANQRNRIKRVIRDSFRLNQHDIPHLDIVVLVRNGVMEMENAEINKLIEKLWRKLSRRYNG.

It belongs to the RnpA family. As to quaternary structure, consists of a catalytic RNA component (M1 or rnpB) and a protein subunit.

The enzyme catalyses Endonucleolytic cleavage of RNA, removing 5'-extranucleotides from tRNA precursor.. Its function is as follows. RNaseP catalyzes the removal of the 5'-leader sequence from pre-tRNA to produce the mature 5'-terminus. It can also cleave other RNA substrates such as 4.5S RNA. The protein component plays an auxiliary but essential role in vivo by binding to the 5'-leader sequence and broadening the substrate specificity of the ribozyme. This Shewanella sp. (strain ANA-3) protein is Ribonuclease P protein component.